Reading from the N-terminus, the 1288-residue chain is VWFA and cache domain-containing protein 1 (1288 aa).

The first 49 residues, 1-49, serve as a signal peptide directing secretion; that stretch reads MAREPEEEETVRPAAVVRRCPRCPGWPGAPRPPLWLLCLVACWILGAVA. The Extracellular segment spans residues 50-1109; the sequence is DADFSILDEA…ITLNMIKSAP (1060 aa). Residue asparagine 159 is glycosylated (N-linked (GlcNAc...) asparagine). The VWFA domain occupies 242-457; sequence HIVVILDHGA…TTVGRFYTNL (216 aa). Cache domains follow at residues 467-546 and 786-867; these read FSLP…SEPP and LTGP…HPTL. The helical transmembrane segment at 1110–1130 threads the bilayer; it reads VGPVAGGIMGCIMVLVLAVYA. The Cytoplasmic portion of the chain corresponds to 1131–1288; that stretch reads YRHQIHRRSH…VTVHTVDAEC (158 aa). Disordered stretches follow at residues 1157-1176 and 1187-1237; these read NLENDRDERDDDSHEDRGII and ERHV…VDVG. Positions 1159–1174 are enriched in basic and acidic residues; the sequence is ENDRDERDDDSHEDRG. The segment covering 1210-1229 has biased composition (polar residues); sequence GYSTMSPQEDSENPPCNNDP.

It belongs to the calcium channel subunit alpha-2/delta family.

The protein localises to the membrane. In terms of biological role, may regulate voltage-dependent calcium channels. The sequence is that of VWFA and cache domain-containing protein 1 (Cachd1) from Mus musculus (Mouse).